Reading from the N-terminus, the 198-residue chain is Probable molybdenum cofactor guanylyltransferase (198 aa).

GTP-binding positions include 9–11 (LAG), K22, D66, and D95. Residue D95 participates in Mg(2+) binding.

It belongs to the MobA family. Mg(2+) serves as cofactor.

It localises to the cytoplasm. The catalysed reaction is Mo-molybdopterin + GTP + H(+) = Mo-molybdopterin guanine dinucleotide + diphosphate. In terms of biological role, transfers a GMP moiety from GTP to Mo-molybdopterin (Mo-MPT) cofactor (Moco or molybdenum cofactor) to form Mo-molybdopterin guanine dinucleotide (Mo-MGD) cofactor. The protein is Probable molybdenum cofactor guanylyltransferase of Clostridium perfringens (strain 13 / Type A).